Reading from the N-terminus, the 316-residue chain is MYSKILGTGSYLPSQVRTNADLEKMVDTSDEWIVARTGIKERRIAAEDETVADMAFYAAENAIDMAGIDKNDIDLIIVATTSSSHTFPSSACQVQAKLGIKGCPAFDLAAACSGFVYALSVADQHIKSGMCKNVLVIGADALSKTCDPTDRSTIILFGDGAGAVVVGASQEPGIISTHIYADGQFGDLLSLPVPERGKDVDKWLHMAGNEVFKVAVTQLSKLVKDTLEANDMHKSELDWLVPHQANYRIISATAKKLSMSLDQVVVTLDRHGNTSAATVPTALDEAVRDGRIKRGQTLLLEAFGGGFTWGSALVKF.

Residues Cys-112 and His-243 contribute to the active site. An ACP-binding region spans residues 244 to 248 (QANYR). Asn-273 is a catalytic residue.

Belongs to the thiolase-like superfamily. FabH family. Homodimer.

The protein localises to the cytoplasm. It catalyses the reaction malonyl-[ACP] + acetyl-CoA + H(+) = 3-oxobutanoyl-[ACP] + CO2 + CoA. It functions in the pathway lipid metabolism; fatty acid biosynthesis. Functionally, catalyzes the condensation reaction of fatty acid synthesis by the addition to an acyl acceptor of two carbons from malonyl-ACP. Catalyzes the first condensation reaction which initiates fatty acid synthesis and may therefore play a role in governing the total rate of fatty acid production. Possesses both acetoacetyl-ACP synthase and acetyl transacylase activities. Its substrate specificity determines the biosynthesis of branched-chain and/or straight-chain of fatty acids. The chain is Beta-ketoacyl-[acyl-carrier-protein] synthase III 1 from Vibrio parahaemolyticus serotype O3:K6 (strain RIMD 2210633).